A 178-amino-acid chain; its full sequence is CASP-like protein 4D1 (178 aa).

Alanine 2 carries the post-translational modification N-acetylalanine. At 2–14 (APPPPAPPSVTLR) the chain is on the cytoplasmic side. A helical membrane pass occupies residues 15-35 (TVLLLLRVLTAAFLLITVVLI). Topologically, residues 36 to 60 (STNTVTLEISSTSIKLPFNDVYAYR) are extracellular. Residues 61-81 (YMLSAAVIGLVYAVVQLFLTI) form a helical membrane-spanning segment. Residues 82-97 (SQFATGKTHPLTYQFD) lie on the Cytoplasmic side of the membrane. Residues 98–118 (FYGDKVISYLLATGSAAGFGV) traverse the membrane as a helical segment. The Extracellular segment spans residues 119 to 149 (SKDLKDTYIALIEFDSTDPVDKFFSKGYASA). Residues 150–170 (SLLLFAFVSLAVLSVFSSLAL) traverse the membrane as a helical segment. Residues 171 to 178 (SKRPVPVS) are Cytoplasmic-facing.

It belongs to the Casparian strip membrane proteins (CASP) family. As to quaternary structure, homodimer and heterodimers. As to expression, expressed in the root epidermis.

The protein localises to the cell membrane. This is CASP-like protein 4D1 from Arabidopsis thaliana (Mouse-ear cress).